We begin with the raw amino-acid sequence, 412 residues long: Phosphoglycerate kinase (412 aa).

Substrate contacts are provided by residues 24-26 (DLN), R47, 70-73 (HLGR), R130, and R167. ATP is bound by residues K217, G312, E343, and 369–372 (GGDS).

It belongs to the phosphoglycerate kinase family. Monomer.

The protein resides in the cytoplasm. The enzyme catalyses (2R)-3-phosphoglycerate + ATP = (2R)-3-phospho-glyceroyl phosphate + ADP. It functions in the pathway carbohydrate degradation; glycolysis; pyruvate from D-glyceraldehyde 3-phosphate: step 2/5. This Kineococcus radiotolerans (strain ATCC BAA-149 / DSM 14245 / SRS30216) protein is Phosphoglycerate kinase.